Here is a 434-residue protein sequence, read N- to C-terminus: UDP-N-acetylglucosamine 1-carboxyvinyltransferase (434 aa).

Position 22 to 23 (22 to 23) interacts with phosphoenolpyruvate; sequence KN. UDP-N-acetyl-alpha-D-glucosamine is bound at residue arginine 93. Cysteine 117 acts as the Proton donor in catalysis. A 2-(S-cysteinyl)pyruvic acid O-phosphothioketal modification is found at cysteine 117. UDP-N-acetyl-alpha-D-glucosamine is bound by residues aspartate 307 and valine 329.

The protein belongs to the EPSP synthase family. MurA subfamily.

The protein resides in the cytoplasm. It catalyses the reaction phosphoenolpyruvate + UDP-N-acetyl-alpha-D-glucosamine = UDP-N-acetyl-3-O-(1-carboxyvinyl)-alpha-D-glucosamine + phosphate. It functions in the pathway cell wall biogenesis; peptidoglycan biosynthesis. Cell wall formation. Adds enolpyruvyl to UDP-N-acetylglucosamine. The polypeptide is UDP-N-acetylglucosamine 1-carboxyvinyltransferase (Coxiella burnetii (strain CbuG_Q212) (Coxiella burnetii (strain Q212))).